Reading from the N-terminus, the 77-residue chain is Acyl carrier protein (77 aa).

The region spanning 1–76 (MATFDDVKAV…DVVNYIDNLK (76 aa)) is the Carrier domain. The residue at position 36 (Ser36) is an O-(pantetheine 4'-phosphoryl)serine.

It belongs to the acyl carrier protein (ACP) family. In terms of processing, 4'-phosphopantetheine is transferred from CoA to a specific serine of apo-ACP by AcpS. This modification is essential for activity because fatty acids are bound in thioester linkage to the sulfhydryl of the prosthetic group.

The protein localises to the cytoplasm. It functions in the pathway lipid metabolism; fatty acid biosynthesis. In terms of biological role, carrier of the growing fatty acid chain in fatty acid biosynthesis. The polypeptide is Acyl carrier protein (Campylobacter jejuni subsp. doylei (strain ATCC BAA-1458 / RM4099 / 269.97)).